Reading from the N-terminus, the 94-residue chain is Large ribosomal subunit protein eL31 (94 aa).

It belongs to the eukaryotic ribosomal protein eL31 family.

This Pyrococcus abyssi (strain GE5 / Orsay) protein is Large ribosomal subunit protein eL31 (rpl31e).